The following is a 132-amino-acid chain: Large ribosomal subunit protein uL22c (132 aa).

The protein belongs to the universal ribosomal protein uL22 family. As to quaternary structure, part of the 50S ribosomal subunit.

The protein resides in the plastid. Its subcellular location is the chloroplast. This protein binds specifically to 23S rRNA. In terms of biological role, the globular domain of the protein is located near the polypeptide exit tunnel on the outside of the subunit, while an extended beta-hairpin is found that lines the wall of the exit tunnel in the center of the 70S ribosome. The chain is Large ribosomal subunit protein uL22c (rpl22) from Populus trichocarpa (Western balsam poplar).